We begin with the raw amino-acid sequence, 503 residues long: Probable cytosol aminopeptidase (503 aa).

Mn(2+)-binding residues include Lys274 and Asp279. Residue Lys286 is part of the active site. Residues Asp297, Asp356, and Glu358 each contribute to the Mn(2+) site. Arg360 is an active-site residue.

The protein belongs to the peptidase M17 family. Mn(2+) is required as a cofactor.

It localises to the cytoplasm. The catalysed reaction is Release of an N-terminal amino acid, Xaa-|-Yaa-, in which Xaa is preferably Leu, but may be other amino acids including Pro although not Arg or Lys, and Yaa may be Pro. Amino acid amides and methyl esters are also readily hydrolyzed, but rates on arylamides are exceedingly low.. It carries out the reaction Release of an N-terminal amino acid, preferentially leucine, but not glutamic or aspartic acids.. Its function is as follows. Presumably involved in the processing and regular turnover of intracellular proteins. Catalyzes the removal of unsubstituted N-terminal amino acids from various peptides. This Burkholderia pseudomallei (strain 1710b) protein is Probable cytosol aminopeptidase.